The chain runs to 143 residues: Nucleoside diphosphate kinase (143 aa).

Residues lysine 11, phenylalanine 59, arginine 87, threonine 93, arginine 104, and asparagine 114 each coordinate ATP. Histidine 117 serves as the catalytic Pros-phosphohistidine intermediate.

Belongs to the NDK family. In terms of assembly, homotetramer. Requires Mg(2+) as cofactor.

The protein resides in the cytoplasm. It catalyses the reaction a 2'-deoxyribonucleoside 5'-diphosphate + ATP = a 2'-deoxyribonucleoside 5'-triphosphate + ADP. The catalysed reaction is a ribonucleoside 5'-diphosphate + ATP = a ribonucleoside 5'-triphosphate + ADP. Functionally, major role in the synthesis of nucleoside triphosphates other than ATP. The ATP gamma phosphate is transferred to the NDP beta phosphate via a ping-pong mechanism, using a phosphorylated active-site intermediate. This is Nucleoside diphosphate kinase from Shewanella sediminis (strain HAW-EB3).